The chain runs to 464 residues: Septin homolog spn5 (464 aa).

The disordered stretch occupies residues glutamine 28 to proline 91. Basic and acidic residues-rich tracts occupy residues glutamate 41 to isoleucine 54 and threonine 69 to glutamate 81. Positions asparagine 115–alanine 370 constitute a Septin-type G domain. The tract at residues glycine 125–threonine 132 is G1 motif. GTP is bound by residues glycine 125–threonine 132, threonine 151, glycine 177, lysine 257–glutamate 265, glycine 304, and arginine 319. The tract at residues aspartate 174–glycine 177 is G3 motif. The interval glycine 256–aspartate 259 is G4 motif. The stretch at leucine 396 to glycine 453 forms a coiled coil.

It belongs to the TRAFAC class TrmE-Era-EngA-EngB-Septin-like GTPase superfamily. Septin GTPase family. In terms of assembly, component of the sporulation-specific septin complex composed of at least spn2, spn5, spn6 and spn7.

Its subcellular location is the nucleus. It localises to the forespore membrane. In terms of biological role, septin-like protein involved in the correct orientation of forespore membrane extension during sporulation. This chain is Septin homolog spn5 (spn5), found in Schizosaccharomyces pombe (strain 972 / ATCC 24843) (Fission yeast).